The sequence spans 394 residues: Acetate kinase (394 aa).

Asparagine 7 contacts Mg(2+). Lysine 14 lines the ATP pocket. Arginine 88 contacts substrate. Catalysis depends on aspartate 145, which acts as the Proton donor/acceptor. Residues histidine 205–glycine 209, aspartate 279–arginine 281, and glycine 327–asparagine 331 each bind ATP. Mg(2+) is bound at residue glutamate 379.

The protein belongs to the acetokinase family. As to quaternary structure, homodimer. Mg(2+) serves as cofactor. Requires Mn(2+) as cofactor.

It is found in the cytoplasm. It catalyses the reaction acetate + ATP = acetyl phosphate + ADP. The protein operates within metabolic intermediate biosynthesis; acetyl-CoA biosynthesis; acetyl-CoA from acetate: step 1/2. Its function is as follows. Catalyzes the formation of acetyl phosphate from acetate and ATP. Can also catalyze the reverse reaction. This chain is Acetate kinase, found in Campylobacter lari (strain RM2100 / D67 / ATCC BAA-1060).